A 411-amino-acid polypeptide reads, in one-letter code: F-box/kelch-repeat protein At3g61590 (411 aa).

In terms of domain architecture, F-box spans 37 to 83; the sequence is FSMDSLLPDDLLERILSFLPIASIFRAGTVCKRWNEIVSSRRFLCNF. Kelch repeat units lie at residues 81 to 135, 137 to 178, 196 to 246, 251 to 299, 302 to 350, and 352 to 401; these read CNFS…SSCG, VCFM…MSTS, SIVK…ICNN, MIYS…LMNL, RLVI…EFDE, and FASS…FTGF.

Part of a SCF (ASK-cullin-F-box) protein ligase complex. Interacts with SKP1A/ASK1, SKP1B/ASK2, ASK3, ASK9, ASK11, ASK12, ASK13, ASK14, ASK16 and ASK18.

The protein operates within protein modification; protein ubiquitination. Functionally, component of SCF(ASK-cullin-F-box) E3 ubiquitin ligase complexes, which may mediate the ubiquitination and subsequent proteasomal degradation of target proteins. This is F-box/kelch-repeat protein At3g61590 from Arabidopsis thaliana (Mouse-ear cress).